Reading from the N-terminus, the 32-residue chain is Alcohol dehydrogenase-related 31 kDa protein (32 aa).

Residue 11 to 32 (YVADCGGIALETSXVLMTKNIA) participates in NAD(+) binding.

This sequence belongs to the short-chain dehydrogenases/reductases (SDR) family.

In Drosophila yakuba (Fruit fly), this protein is Alcohol dehydrogenase-related 31 kDa protein (Adhr).